A 601-amino-acid chain; its full sequence is Putative helicase 7 (601 aa).

A Helicase ATP-binding domain is found at 17 to 182 (QSFLMSDKNL…IIDAEIIKTD (166 aa)). 30–37 (APTGTGKS) contributes to the ATP binding site. The DEAH box motif lies at 129–132 (DEIH). Residues 208–375 (LKEDFIKKMV…VLEDFLLALI (168 aa)) enclose the Helicase C-terminal domain.

In Saccharolobus islandicus (Sulfolobus islandicus), this protein is Putative helicase 7 (SIFV0007).